A 116-amino-acid chain; its full sequence is Large ribosomal subunit protein bL20 (116 aa).

It belongs to the bacterial ribosomal protein bL20 family.

Binds directly to 23S ribosomal RNA and is necessary for the in vitro assembly process of the 50S ribosomal subunit. It is not involved in the protein synthesizing functions of that subunit. In Mycoplasmopsis fermentans (Mycoplasma fermentans), this protein is Large ribosomal subunit protein bL20 (rplT).